Here is a 280-residue protein sequence, read N- to C-terminus: Four and a half LIM domains protein 1 (280 aa).

At S2 the chain carries N-acetylserine. Position 4 is an N6-acetyllysine (K4). The segment at 7-31 adopts a C4-type zinc-finger fold; sequence CHYCRDPLQGKKYVQKDGRHCCLKC. LIM zinc-binding domains follow at residues 40–92, 101–153, 162–212, and 221–276; these read CVDC…CNKC, CKGC…CVTC, CVKC…CVDC, and CAGC…CPDC. Residue K86 forms a Glycyl lysine isopeptide (Lys-Gly) (interchain with G-Cter in SUMO2) linkage.

In terms of tissue distribution, isoform 1 seems to be most abundant in each tissue and isoform 2 much less abundant. Isoform 1 is highly expressed in skeletal muscle and lung, and to a lesser extent in heart, brain and kidney. Isoform 2 was found in brain, lung kidney and genital organs.

It is found in the cytoplasm. It localises to the nucleus. May have an involvement in muscle development or hypertrophy. Isoform 2 binds to RBP-J and plays a negative regulatory role in the RBP-J-mediated transcription in mammalian systems. In Mus musculus (Mouse), this protein is Four and a half LIM domains protein 1 (Fhl1).